A 47-amino-acid chain; its full sequence is Defensin-like protein 1 (47 aa).

4 disulfide bridges follow: cysteine 3-cysteine 47, cysteine 14-cysteine 34, cysteine 20-cysteine 41, and cysteine 24-cysteine 43.

As to quaternary structure, monomer and homodimer.

Functionally, inhibits trypsin but not chymotrypsin. This Vigna unguiculata (Cowpea) protein is Defensin-like protein 1.